We begin with the raw amino-acid sequence, 143 residues long: Large ribosomal subunit protein uL11 (143 aa).

It belongs to the universal ribosomal protein uL11 family. In terms of assembly, part of the ribosomal stalk of the 50S ribosomal subunit. Interacts with L10 and the large rRNA to form the base of the stalk. L10 forms an elongated spine to which L12 dimers bind in a sequential fashion forming a multimeric L10(L12)X complex. In terms of processing, one or more lysine residues are methylated.

Functionally, forms part of the ribosomal stalk which helps the ribosome interact with GTP-bound translation factors. This is Large ribosomal subunit protein uL11 from Cutibacterium acnes (strain DSM 16379 / KPA171202) (Propionibacterium acnes).